The primary structure comprises 232 residues: Noggin (232 aa).

The signal sequence occupies residues 1–27; it reads MERCPSLGVTLYALVVVLGLRATPAGG. N-linked (GlcNAc...) asparagine glycosylation occurs at Asn62. Residues 77–96 form a disordered region; the sequence is GFMATSPPEDRPGGGGGAAG. Intrachain disulfides connect Cys155/Cys192, Cys178/Cys228, Cys184/Cys230, and Cys207/Cys215.

The protein belongs to the noggin family. In terms of assembly, homodimer. Interacts with GDF5; inhibits chondrocyte differentiation.

Its subcellular location is the secreted. Inhibitor of bone morphogenetic proteins (BMP) signaling which is required for growth and patterning of the neural tube and somite. Essential for cartilage morphogenesis and joint formation. Inhibits chondrocyte differentiation through its interaction with GDF5 and, probably, GDF6. This chain is Noggin (NOG), found in Homo sapiens (Human).